Here is a 353-residue protein sequence, read N- to C-terminus: Photosystem II protein D1 (353 aa).

T2 bears the N-acetylthreonine mark. T2 bears the Phosphothreonine mark. 3 helical membrane-spanning segments follow: residues 29 to 46 (YIGWFGVLMIPTLLTATS), 118 to 133 (HFLLGVACYMGREWEL), and 142 to 156 (WIAVAYSAPVAAATA). Chlorophyll a is bound at residue H118. Y126 is a pheophytin a binding site. Positions 170 and 189 each coordinate [CaMn4O5] cluster. Residues 197–218 (FHMLGVAGVFGGSLFSAMHGSL) form a helical membrane-spanning segment. H198 is a binding site for chlorophyll a. Residues H215 and 264 to 265 (SF) each bind a quinone. H215 contributes to the Fe cation binding site. H272 lines the Fe cation pocket. A helical membrane pass occupies residues 274–288 (FLAAWPVVGIWFTAL). Residues H332, E333, D342, and A344 each contribute to the [CaMn4O5] cluster site. The propeptide occupies 345–353 (AVEAPSTNG).

The protein belongs to the reaction center PufL/M/PsbA/D family. In terms of assembly, PSII is composed of 1 copy each of membrane proteins PsbA, PsbB, PsbC, PsbD, PsbE, PsbF, PsbH, PsbI, PsbJ, PsbK, PsbL, PsbM, PsbT, PsbX, PsbY, PsbZ, Psb30/Ycf12, at least 3 peripheral proteins of the oxygen-evolving complex and a large number of cofactors. It forms dimeric complexes. It depends on The D1/D2 heterodimer binds P680, chlorophylls that are the primary electron donor of PSII, and subsequent electron acceptors. It shares a non-heme iron and each subunit binds pheophytin, quinone, additional chlorophylls, carotenoids and lipids. D1 provides most of the ligands for the Mn4-Ca-O5 cluster of the oxygen-evolving complex (OEC). There is also a Cl(-1) ion associated with D1 and D2, which is required for oxygen evolution. The PSII complex binds additional chlorophylls, carotenoids and specific lipids. as a cofactor. In terms of processing, tyr-161 forms a radical intermediate that is referred to as redox-active TyrZ, YZ or Y-Z. C-terminally processed by CTPA; processing is essential to allow assembly of the oxygen-evolving complex and thus photosynthetic growth.

The protein localises to the plastid. It is found in the chloroplast thylakoid membrane. It carries out the reaction 2 a plastoquinone + 4 hnu + 2 H2O = 2 a plastoquinol + O2. Functionally, photosystem II (PSII) is a light-driven water:plastoquinone oxidoreductase that uses light energy to abstract electrons from H(2)O, generating O(2) and a proton gradient subsequently used for ATP formation. It consists of a core antenna complex that captures photons, and an electron transfer chain that converts photonic excitation into a charge separation. The D1/D2 (PsbA/PsbD) reaction center heterodimer binds P680, the primary electron donor of PSII as well as several subsequent electron acceptors. The chain is Photosystem II protein D1 from Drimys granadensis.